A 405-amino-acid polypeptide reads, in one-letter code: Probable tRNA sulfurtransferase (405 aa).

The THUMP domain occupies 60–165 (VPVAESLKQI…EEAAYLSYEN (106 aa)). Residues 183 to 184 (ML), 208 to 209 (HF), Arg-265, Gly-287, and Gln-296 each bind ATP.

The protein belongs to the ThiI family.

The protein localises to the cytoplasm. It catalyses the reaction [ThiI sulfur-carrier protein]-S-sulfanyl-L-cysteine + a uridine in tRNA + 2 reduced [2Fe-2S]-[ferredoxin] + ATP + H(+) = [ThiI sulfur-carrier protein]-L-cysteine + a 4-thiouridine in tRNA + 2 oxidized [2Fe-2S]-[ferredoxin] + AMP + diphosphate. The enzyme catalyses [ThiS sulfur-carrier protein]-C-terminal Gly-Gly-AMP + S-sulfanyl-L-cysteinyl-[cysteine desulfurase] + AH2 = [ThiS sulfur-carrier protein]-C-terminal-Gly-aminoethanethioate + L-cysteinyl-[cysteine desulfurase] + A + AMP + 2 H(+). It participates in cofactor biosynthesis; thiamine diphosphate biosynthesis. Functionally, catalyzes the ATP-dependent transfer of a sulfur to tRNA to produce 4-thiouridine in position 8 of tRNAs, which functions as a near-UV photosensor. Also catalyzes the transfer of sulfur to the sulfur carrier protein ThiS, forming ThiS-thiocarboxylate. This is a step in the synthesis of thiazole, in the thiamine biosynthesis pathway. The sulfur is donated as persulfide by IscS. The sequence is that of Probable tRNA sulfurtransferase from Streptococcus mutans serotype c (strain ATCC 700610 / UA159).